We begin with the raw amino-acid sequence, 867 residues long: Glutamate receptor 1.2 (867 aa).

The first 27 residues, 1–27, serve as a signal peptide directing secretion; the sequence is MVRICIQTPILLSFLLVLLFFISNCFA. The Extracellular segment spans residues 28-560; sequence SSQNNDDDKR…SMWVFFQPLT (533 aa). N-linked (GlcNAc...) asparagine glycosylation is found at N301, N400, N496, and N499. A helical membrane pass occupies residues 561–581; sequence PNLWITSAAFFVLTGIIVWLI. Topologically, residues 582–590 are cytoplasmic; the sequence is ERAENKEFQ. Residues 591-611 form a helical membrane-spanning segment; it reads GSWPQQIGVVIWFGFSTLVYA. Residues 612–622 lie on the Cytoplasmic side of the membrane; it reads HREKLQHNLSR. The helical transmembrane segment at 623–643 threads the bilayer; it reads FVVTVWVFAVLILVTSYTATL. Topologically, residues 644-792 are extracellular; that stretch reads TSMMTVQQIR…NPITLYRFRG (149 aa). 4 N-linked (GlcNAc...) asparagine glycosylation sites follow: N676, N688, N699, and N748. The helical transmembrane segment at 793 to 813 threads the bilayer; the sequence is LFMITGVSFAFALAVLLILWL. Over 814-867 the chain is Cytoplasmic; the sequence is RERWEILVNSVNIYFSQRLRHFRILFTRTIHPSPLGLDNPIGENAVQMAQRNRR.

This sequence belongs to the glutamate-gated ion channel (TC 1.A.10.1) family. As to quaternary structure, may form heteromers. As to expression, expressed predominantly in roots and siliques.

The protein resides in the membrane. Its function is as follows. Glutamate-gated receptor that probably acts as a non-selective cation channel. May be involved in light-signal transduction and calcium homeostasis via the regulation of calcium influx into cells. This is Glutamate receptor 1.2 (GLR1.2) from Arabidopsis thaliana (Mouse-ear cress).